A 331-amino-acid chain; its full sequence is Ketol-acid reductoisomerase (NADP(+)) (331 aa).

The 181-residue stretch at 1–181 (MKMYYDADAD…GGTRAGVIET (181 aa)) folds into the KARI N-terminal Rossmann domain. Residues 24-27 (YGSQ), Arg-47, Ser-50, and 82-85 (DEKQ) contribute to the NADP(+) site. The active site involves His-107. Residue Gly-133 coordinates NADP(+). The region spanning 182 to 327 (TFREETETDL…KKLRAMMPWL (146 aa)) is the KARI C-terminal knotted domain. The Mg(2+) site is built by Asp-190, Glu-194, Glu-226, and Glu-230. Ser-251 is a substrate binding site.

This sequence belongs to the ketol-acid reductoisomerase family. Mg(2+) is required as a cofactor.

The enzyme catalyses (2R)-2,3-dihydroxy-3-methylbutanoate + NADP(+) = (2S)-2-acetolactate + NADPH + H(+). It catalyses the reaction (2R,3R)-2,3-dihydroxy-3-methylpentanoate + NADP(+) = (S)-2-ethyl-2-hydroxy-3-oxobutanoate + NADPH + H(+). Its pathway is amino-acid biosynthesis; L-isoleucine biosynthesis; L-isoleucine from 2-oxobutanoate: step 2/4. It participates in amino-acid biosynthesis; L-valine biosynthesis; L-valine from pyruvate: step 2/4. Involved in the biosynthesis of branched-chain amino acids (BCAA). Catalyzes an alkyl-migration followed by a ketol-acid reduction of (S)-2-acetolactate (S2AL) to yield (R)-2,3-dihydroxy-isovalerate. In the isomerase reaction, S2AL is rearranged via a Mg-dependent methyl migration to produce 3-hydroxy-3-methyl-2-ketobutyrate (HMKB). In the reductase reaction, this 2-ketoacid undergoes a metal-dependent reduction by NADPH to yield (R)-2,3-dihydroxy-isovalerate. This is Ketol-acid reductoisomerase (NADP(+)) from Heliobacterium modesticaldum (strain ATCC 51547 / Ice1).